The following is a 234-amino-acid chain: Membrane glycoprotein RL11 (234 aa).

The signal sequence occupies residues 1–23; the sequence is MQTYSTPLTLIIVTSLFLFTTQG. Residues 183-203 traverse the membrane as a helical segment; sequence LHCAWVSGLMIFVGALVICFL.

The protein localises to the host membrane. The polypeptide is Membrane glycoprotein RL11 (RL11) (Human cytomegalovirus (strain Merlin) (HHV-5)).